Consider the following 700-residue polypeptide: Methionine--tRNA ligase (700 aa).

Residues 13-23 carry the 'HIGH' region motif; it reads PYANGDIHLGH. 4 residues coordinate Zn(2+): Cys-144, Cys-147, Cys-157, and Cys-160. Positions 341–345 match the 'KMSKS' region motif; that stretch reads KMSKS. Lys-344 contributes to the ATP binding site. One can recognise a tRNA-binding domain in the interval 598–700; it reads DFAKVEMKVA…DNCVIGDLLA (103 aa).

The protein belongs to the class-I aminoacyl-tRNA synthetase family. MetG type 1 subfamily. In terms of assembly, homodimer. Zn(2+) serves as cofactor.

The protein localises to the cytoplasm. The enzyme catalyses tRNA(Met) + L-methionine + ATP = L-methionyl-tRNA(Met) + AMP + diphosphate. Its function is as follows. Is required not only for elongation of protein synthesis but also for the initiation of all mRNA translation through initiator tRNA(fMet) aminoacylation. The polypeptide is Methionine--tRNA ligase (Psychrobacter arcticus (strain DSM 17307 / VKM B-2377 / 273-4)).